A 1133-amino-acid chain; its full sequence is Nuclear pore complex-interacting protein family member B5 (1133 aa).

Residues Trp-60–Val-84 traverse the membrane as a helical segment. Disordered stretches follow at residues Asn-241–Ser-262, Leu-290–Pro-575, and Glu-868–Ser-1133. Residues Gln-252–Ser-262 are compositionally biased toward polar residues. The segment covering Pro-349–Pro-359 has biased composition (pro residues). Basic and acidic residues-rich tracts occupy residues Asp-406–Arg-416, Asp-448–Arg-458, Asp-490–Arg-500, Asp-528–Arg-538, Asp-903–Arg-913, Asp-945–Arg-955, and Asp-987–Arg-997.

Belongs to the NPIP family.

It localises to the membrane. The protein is Nuclear pore complex-interacting protein family member B5 (NPIPB5) of Homo sapiens (Human).